A 440-amino-acid chain; its full sequence is Argininosuccinate lyase (440 aa).

The protein belongs to the lyase 1 family. Argininosuccinate lyase subfamily.

It localises to the cytoplasm. It catalyses the reaction 2-(N(omega)-L-arginino)succinate = fumarate + L-arginine. It functions in the pathway amino-acid biosynthesis; L-arginine biosynthesis; L-arginine from L-ornithine and carbamoyl phosphate: step 3/3. The polypeptide is Argininosuccinate lyase (Clostridium botulinum (strain Langeland / NCTC 10281 / Type F)).